The sequence spans 289 residues: Nucleotide-binding protein Francci3_1634 (289 aa).

Gly13–Ser20 provides a ligand contact to ATP. Asp64–Gly67 serves as a coordination point for GTP.

Belongs to the RapZ-like family.

Its function is as follows. Displays ATPase and GTPase activities. This Frankia casuarinae (strain DSM 45818 / CECT 9043 / HFP020203 / CcI3) protein is Nucleotide-binding protein Francci3_1634.